The primary structure comprises 685 residues: Bifunctional lycopene cyclase/phytoene synthase (685 aa).

The interval 15–255 (TLSYRHFHLL…LVSACFTFDR (241 aa)) is lycopene beta-cyclase. Transmembrane regions (helical) follow at residues 21 to 41 (FHLL…RPFL), 48 to 68 (KLIL…NLIV), 92 to 114 (YFFF…RWAL), 129 to 149 (LATP…KAAV), 156 to 176 (YFGM…WGSV), 187 to 207 (GLAP…ASDV), and 231 to 251 (LPIE…SACF). Residues 262-685 (QSVAENAPPL…RAVSAVYFGV (424 aa)) are phytoene synthase.

It in the N-terminal section; belongs to the lycopene beta-cyclase family. This sequence in the C-terminal section; belongs to the phytoene/squalene synthase family.

It localises to the membrane. The enzyme catalyses all-trans-lycopene = gamma-carotene. It catalyses the reaction gamma-carotene = all-trans-beta-carotene. The catalysed reaction is 2 (2E,6E,10E)-geranylgeranyl diphosphate = 15-cis-phytoene + 2 diphosphate. Its pathway is carotenoid biosynthesis; beta-carotene biosynthesis. It functions in the pathway carotenoid biosynthesis; phytoene biosynthesis; all-trans-phytoene from geranylgeranyl diphosphate: step 1/1. Its function is as follows. Bifunctional enzyme that catalyzes the reactions from geranylgeranyl diphosphate to phytoene (phytoene synthase) and lycopene to beta-carotene via the intermediate gamma-carotene (lycopene cyclase). In Sporisorium reilianum (strain SRZ2) (Maize head smut fungus), this protein is Bifunctional lycopene cyclase/phytoene synthase.